Consider the following 305-residue polypeptide: NAD kinase (305 aa).

Residue Asp84 is the Proton acceptor of the active site. NAD(+) is bound by residues 84-85 (DG), 159-160 (NE), His170, Arg187, Asp189, 200-205 (TAYSLS), and Gln260.

It belongs to the NAD kinase family. Requires a divalent metal cation as cofactor.

It is found in the cytoplasm. The catalysed reaction is NAD(+) + ATP = ADP + NADP(+) + H(+). Its function is as follows. Involved in the regulation of the intracellular balance of NAD and NADP, and is a key enzyme in the biosynthesis of NADP. Catalyzes specifically the phosphorylation on 2'-hydroxyl of the adenosine moiety of NAD to yield NADP. In Pasteurella multocida (strain Pm70), this protein is NAD kinase.